Consider the following 319-residue polypeptide: 4-hydroxy-3-methylbut-2-enyl diphosphate reductase (319 aa).

[4Fe-4S] cluster is bound at residue Cys-15. His-44 and His-77 together coordinate (2E)-4-hydroxy-3-methylbut-2-enyl diphosphate. The dimethylallyl diphosphate site is built by His-44 and His-77. 2 residues coordinate isopentenyl diphosphate: His-44 and His-77. Cys-99 is a [4Fe-4S] cluster binding site. His-127 is a (2E)-4-hydroxy-3-methylbut-2-enyl diphosphate binding site. Residue His-127 participates in dimethylallyl diphosphate binding. His-127 contributes to the isopentenyl diphosphate binding site. The active-site Proton donor is the Glu-129. Thr-172 provides a ligand contact to (2E)-4-hydroxy-3-methylbut-2-enyl diphosphate. Position 202 (Cys-202) interacts with [4Fe-4S] cluster. (2E)-4-hydroxy-3-methylbut-2-enyl diphosphate-binding residues include Ser-230, Ser-231, Asn-232, and Ser-274. Dimethylallyl diphosphate-binding residues include Ser-230, Ser-231, Asn-232, and Ser-274. Isopentenyl diphosphate contacts are provided by Ser-230, Ser-231, Asn-232, and Ser-274.

It belongs to the IspH family. It depends on [4Fe-4S] cluster as a cofactor.

The catalysed reaction is isopentenyl diphosphate + 2 oxidized [2Fe-2S]-[ferredoxin] + H2O = (2E)-4-hydroxy-3-methylbut-2-enyl diphosphate + 2 reduced [2Fe-2S]-[ferredoxin] + 2 H(+). It catalyses the reaction dimethylallyl diphosphate + 2 oxidized [2Fe-2S]-[ferredoxin] + H2O = (2E)-4-hydroxy-3-methylbut-2-enyl diphosphate + 2 reduced [2Fe-2S]-[ferredoxin] + 2 H(+). Its pathway is isoprenoid biosynthesis; dimethylallyl diphosphate biosynthesis; dimethylallyl diphosphate from (2E)-4-hydroxy-3-methylbutenyl diphosphate: step 1/1. The protein operates within isoprenoid biosynthesis; isopentenyl diphosphate biosynthesis via DXP pathway; isopentenyl diphosphate from 1-deoxy-D-xylulose 5-phosphate: step 6/6. Functionally, catalyzes the conversion of 1-hydroxy-2-methyl-2-(E)-butenyl 4-diphosphate (HMBPP) into a mixture of isopentenyl diphosphate (IPP) and dimethylallyl diphosphate (DMAPP). Acts in the terminal step of the DOXP/MEP pathway for isoprenoid precursor biosynthesis. The chain is 4-hydroxy-3-methylbut-2-enyl diphosphate reductase from Xanthomonas euvesicatoria pv. vesicatoria (strain 85-10) (Xanthomonas campestris pv. vesicatoria).